Reading from the N-terminus, the 539-residue chain is Chaperonin GroEL (539 aa).

ATP contacts are provided by residues 29 to 32 (TLGP), 86 to 90 (DGTTT), Gly-413, 477 to 479 (DAL), and Asp-493.

It belongs to the chaperonin (HSP60) family. Forms a cylinder of 14 subunits composed of two heptameric rings stacked back-to-back. Interacts with the co-chaperonin GroES.

It is found in the cytoplasm. The catalysed reaction is ATP + H2O + a folded polypeptide = ADP + phosphate + an unfolded polypeptide.. Together with its co-chaperonin GroES, plays an essential role in assisting protein folding. The GroEL-GroES system forms a nano-cage that allows encapsulation of the non-native substrate proteins and provides a physical environment optimized to promote and accelerate protein folding. The protein is Chaperonin GroEL of Clostridium perfringens (strain ATCC 13124 / DSM 756 / JCM 1290 / NCIMB 6125 / NCTC 8237 / Type A).